The primary structure comprises 87 residues: NADH-ubiquinone oxidoreductase chain 4L (87 aa).

2 helical membrane-spanning segments follow: residues 22-42 and 49-69; these read FLSF…FIIG and LFLI…SLLV.

The protein belongs to the complex I subunit 4L family.

The protein resides in the mitochondrion membrane. It carries out the reaction a ubiquinone + NADH + 5 H(+)(in) = a ubiquinol + NAD(+) + 4 H(+)(out). Core subunit of the mitochondrial membrane respiratory chain NADH dehydrogenase (Complex I) that is believed to belong to the minimal assembly required for catalysis. Complex I functions in the transfer of electrons from NADH to the respiratory chain. The immediate electron acceptor for the enzyme is believed to be ubiquinone. In Apis mellifera ligustica (Common honeybee), this protein is NADH-ubiquinone oxidoreductase chain 4L (ND4L).